The primary structure comprises 115 residues: Large ribosomal subunit protein bL20c (115 aa).

This sequence belongs to the bacterial ribosomal protein bL20 family.

The protein resides in the plastid. It is found in the chloroplast. Functionally, binds directly to 23S ribosomal RNA and is necessary for the in vitro assembly process of the 50S ribosomal subunit. It is not involved in the protein synthesizing functions of that subunit. The polypeptide is Large ribosomal subunit protein bL20c (Gnetum parvifolium (Small-leaved jointfir)).